The primary structure comprises 605 residues: Inactive LRR receptor-like serine/threonine-protein kinase BIR2 (605 aa).

Positions 1–28 are cleaved as a signal peptide; sequence MKEIGSKPRKLLPLCFIIFLCFCSSVMA. At 29–229 the chain is on the extracellular side; it reads ADEDDIRCLR…CGGLSKKNLG (201 aa). A glycan (N-linked (GlcNAc...) asparagine) is linked at N58. LRR repeat units lie at residues 101–125, 127–150, 152–173, and 174–197; these read CASLQKLDLSSNRLSGNIPTELCNW, PFLVSLDLSNNELNGEIPPDLAKC, FVNSLVLSDNRLSGQIPVQFSA, and LGRLGRFSVANNDLSGRIPVFFSS. The helical transmembrane segment at 230-250 threads the bilayer; it reads IIIAAGVFGAAASMLLAFGIW. At 251–605 the chain is on the cytoplasmic side; sequence WYYHLKWTRR…IFDTQENEKV (355 aa). A Phosphoserine; by BAK1 modification is found at S271. T283 carries the phosphothreonine; by BAK1 modification. S286 carries the post-translational modification Phosphoserine; by BAK1. Position 304 is a phosphothreonine; by BAK1 (T304). In terms of domain architecture, Protein kinase spans 307 to 578; that stretch reads FNSENIIVST…FQAYQSLKAI (272 aa). Residue 313–321 coordinates ATP; that stretch reads IVSTRTGTT. S330 is modified (phosphoserine; by BAK1). K335 contacts ATP. S389 carries the post-translational modification Phosphoserine; by BAK1. At T402 the chain carries Phosphothreonine. Phosphoserine; by BAK1 occurs at positions 448 and 462. At T466 the chain carries Phosphothreonine; by BAK1. Y479 carries the phosphotyrosine modification. T482 is subject to Phosphothreonine. S486 is modified (phosphoserine). T533 is subject to Phosphothreonine; by BAK1.

The protein belongs to the protein kinase superfamily. Ser/Thr protein kinase family. Interacts constitutively with BAK1, when phosphorylated, thereby preventing interaction with the ligand-binding LRR-RLK FLS2. Upon infection, pathogen-associated molecular patterns (PAMP) perception leads to BIR2 release from the BAK1 complex and enables the recruitment of BAK1 into the FLS2 complex. Phosphorylated by BAK1, this interacts promotes interaction with BAK1.

It localises to the cell membrane. Its function is as follows. Pseudokinases lacking protein kinase activity and unable to bind ATP-analogs. Negative regulator of pathogen-associated molecular patterns- (PAMP-) triggered immunity by limiting BAK1-receptor complex formation in the absence of ligands. In Arabidopsis thaliana (Mouse-ear cress), this protein is Inactive LRR receptor-like serine/threonine-protein kinase BIR2.